The primary structure comprises 201 residues: Urease accessory protein UreG (201 aa).

11–18 (GPVGSGKT) contacts GTP.

It belongs to the SIMIBI class G3E GTPase family. UreG subfamily. As to quaternary structure, homodimer. UreD, UreF and UreG form a complex that acts as a GTP-hydrolysis-dependent molecular chaperone, activating the urease apoprotein by helping to assemble the nickel containing metallocenter of UreC. The UreE protein probably delivers the nickel.

It is found in the cytoplasm. In terms of biological role, facilitates the functional incorporation of the urease nickel metallocenter. This process requires GTP hydrolysis, probably effectuated by UreG. The protein is Urease accessory protein UreG of Synechococcus sp. (strain CC9605).